Consider the following 939-residue polypeptide: Aconitate hydratase A (939 aa).

Residues 433–453 (GSGESLATGAEGRPSKPVTVA) form a disordered region. The [4Fe-4S] cluster site is built by Cys-475, Cys-541, and Cys-544.

The protein belongs to the aconitase/IPM isomerase family. As to quaternary structure, monomer. [4Fe-4S] cluster serves as cofactor.

The catalysed reaction is citrate = D-threo-isocitrate. It catalyses the reaction (2S,3R)-3-hydroxybutane-1,2,3-tricarboxylate = 2-methyl-cis-aconitate + H2O. It functions in the pathway carbohydrate metabolism; tricarboxylic acid cycle; isocitrate from oxaloacetate: step 2/2. Its pathway is organic acid metabolism; propanoate degradation. Functionally, involved in the catabolism of short chain fatty acids (SCFA) via the tricarboxylic acid (TCA)(acetyl degradation route) and probably via the 2-methylcitrate cycle I (propionate degradation route). Catalyzes the reversible isomerization of citrate to isocitrate via cis-aconitate. Could catalyze the hydration of 2-methyl-cis-aconitate to yield (2R,3S)-2-methylisocitrate. The apo form of AcnA functions as a RNA-binding regulatory protein. In Corynebacterium glutamicum (strain ATCC 13032 / DSM 20300 / JCM 1318 / BCRC 11384 / CCUG 27702 / LMG 3730 / NBRC 12168 / NCIMB 10025 / NRRL B-2784 / 534), this protein is Aconitate hydratase A (acn).